The chain runs to 806 residues: Mitogen-activated protein kinase 7 (806 aa).

Positions 1–23 (MAEPLKEEDGEDGSGEPPGRVKA) are disordered. N-acetylalanine is present on Ala-2. The segment at 2-77 (AEPLKEEDGE…VVSSARRRLT (76 aa)) is required for cytoplasmic targeting. The 293-residue stretch at 55–347 (YEIIETIGNG…AAAALRHPFL (293 aa)) folds into the Protein kinase domain. Residues 61 to 69 (IGNGAYGVV) and Lys-84 each bind ATP. A required for binding to MAP2K5 region spans residues 78-139 (GQQVAIKKIP…FRSVYVVLDL (62 aa)). Positions 140-406 (MESDLHQIIH…QQIRFQPSLQ (267 aa)) are necessary for oligomerization. Asp-182 functions as the Proton acceptor in the catalytic mechanism. The TXY motif lies at 219–221 (TEY). The segment at 407–806 (PVASEPVCPD…LSDLPDLQEP (400 aa)) is may not be required for kinase activity; required to stimulate MEF2C activity. 2 disordered regions span residues 424 to 475 (APSG…SDNT) and 488 to 727 (RSRL…PKGS). A compositionally biased stretch (pro residues) spans 433–443 (SPPPALPPCSG). Basic and acidic residues-rich tracts occupy residues 502–519 (PEPR…EREE), 527–544 (RAKE…KERG), and 563–573 (DNDRSLLERWT). Positions 505-539 (RKPVTAQERQREREEKRRRRQERAKEREKRRQERE) match the Nuclear localization signal motif. Composition is skewed to pro residues over residues 578-592 (PPVP…PTPK) and 627-643 (VCPP…PVPA). Over residues 647-660 (TAPSTSLLASQSLV) the composition is skewed to polar residues. Pro residues predominate over residues 678–689 (PSGPPPPDPGLT). Residues 693–710 (STSESPDVNLVTQQLSKS) are compositionally biased toward polar residues. A Phosphoserine modification is found at Ser-710. Thr-723 is modified (phosphothreonine).

It belongs to the protein kinase superfamily. CMGC Ser/Thr protein kinase family. MAP kinase subfamily. As to quaternary structure, interacts with MAP2K5. Forms oligomers. Interacts with MEF2A, MEF2C and MEF2D; the interaction phosphorylates the MEF2s and enhances transcriptional activity of MEF2A, MEF2C but not MEF2D. Interacts with SGK1. Interacts with PML. Interacts (via N-terminal half) with HSP90AB1-CDC37 chaperone complex in resting cells; the interaction is MAP2K5-independent and prevents MAPK7 from ubiquitination and proteasomal degradation. Interacts with STUB1/CHIP; the interaction is enhanced in the presence of IGF1 or MAP2K5 and promotes STUB1/CHIP E3 ligase activity. It depends on Mg(2+) as a cofactor. In terms of processing, dually phosphorylated on Thr-219 and Tyr-221, which activates the enzyme.

Its subcellular location is the cytoplasm. The protein resides in the nucleus. It is found in the PML body. It carries out the reaction L-seryl-[protein] + ATP = O-phospho-L-seryl-[protein] + ADP + H(+). The catalysed reaction is L-threonyl-[protein] + ATP = O-phospho-L-threonyl-[protein] + ADP + H(+). Its activity is regulated as follows. Activated by tyrosine and threonine phosphorylation. Activated in response to hyperosmolarity, hydrogen peroxide, and epidermal growth factor (EGF). Its function is as follows. Plays a role in various cellular processes such as proliferation, differentiation and cell survival. The upstream activator of MAPK7 is the MAPK kinase MAP2K5. Upon activation, it translocates to the nucleus and phosphorylates various downstream targets including MEF2C. EGF activates MAPK7 through a Ras-independent and MAP2K5-dependent pathway. As part of the MAPK/ERK signaling pathway, acts as a negative regulator of apoptosis in cardiomyocytes via interaction with STUB1/CHIP and promotion of STUB1-mediated ubiquitination and degradation of ICER-type isoforms of CREM. May have a role in muscle cell differentiation. May be important for endothelial function and maintenance of blood vessel integrity. MAP2K5 and MAPK7 interact specifically with one another and not with MEK1/ERK1 or MEK2/ERK2 pathways. Phosphorylates SGK1 at Ser-78 and this is required for growth factor-induced cell cycle progression. Involved in the regulation of p53/TP53 by disrupting the PML-MDM2 interaction. In Rattus norvegicus (Rat), this protein is Mitogen-activated protein kinase 7 (Mapk7).